A 416-amino-acid chain; its full sequence is Protein-lysine N-trimethyltransferase SMYD5 (416 aa).

Positions 21-351 constitute an SET domain; it reads GSVEVRYVDS…PGEEICISYL (331 aa). Residues 98 to 136 form an MYND-type zinc finger; it reads PELCSVRKDLHQNCPHCQVMYCSAECRLAAAEQYHQILC. Position 350 (Tyr-350) interacts with S-adenosyl-L-methionine. Residues 383-416 form a disordered region; it reads EADDPNVTSEEEEEEDEEEGEPEDAELGDEMTDV.

The protein belongs to the class V-like SAM-binding methyltransferase superfamily. Interacts with the N-CoR complex. Interacts with EHMT2 and CBX5. In terms of processing, ubiquitinated and degradaed by the proteasome in response to mild hypothermia (32 degrees Celsius), relieving repression of the SP1 gene.

It localises to the cytoplasm. It carries out the reaction L-lysyl-[protein] + 3 S-adenosyl-L-methionine = N(6),N(6),N(6)-trimethyl-L-lysyl-[protein] + 3 S-adenosyl-L-homocysteine + 3 H(+). The enzyme catalyses L-lysyl(20)-[histone H4] + 3 S-adenosyl-L-methionine = N(6),N(6),N(6)-trimethyl-L-lysyl(20)-[histone H4] + 3 S-adenosyl-L-homocysteine + 3 H(+). It catalyses the reaction L-lysyl(36)-[histone H3] + 3 S-adenosyl-L-methionine = N(6),N(6),N(6)-trimethyl-L-lysyl(36)-[histone H3] + 3 S-adenosyl-L-homocysteine + 3 H(+). Functionally, protein-lysine N-trimethyltransferase that specifically catalyzes trimethylation of 'Lys-22' of the RPL40/eL40 subunit of the 60S ribosome, thereby promoting translation elongation and protein synthesis. May also act as a histone methyltransferase in the context of histone octamers, but not on nucleosome substrates: trimethylates 'Lys-36' of histone H3 and 'Lys-20' of histone H4 to form H3K36me3 and H4K20me3, respectively. The histone methyltransferase activity, which is independent of its SET domain, is however unsure in vivo. In association with the NCoR corepressor complex, involved in the repression of toll-like receptor 4 (TLR4)-target inflammatory genes in macrophages, possibly by catalyzing the formation of H4K20me3 at the gene promoters. Plays an important role in embryonic stem (ES) cell self-renewal and differentiation. Maintains genome stability of ES cells during differentiation through regulation of heterochromatin formation and repression of endogenous repetitive DNA elements by promoting H4K20me3 marks. Acts as a regulator of the hypothermia response: its degradation in response to mild hypothermia relieves the formation of H3K36me3 at gene promoters, allowing expression of the neuroprotective gene SP1. The protein is Protein-lysine N-trimethyltransferase SMYD5 of Mus musculus (Mouse).